The sequence spans 210 residues: Keratin-associated protein 26-1 (210 aa).

It belongs to the PMG family. Interacts with hair keratins. In terms of tissue distribution, localized high up in the well differentiated portion of the hair follicle cuticle (about 10-15 cell layers above the apex of the dermal papilla).

Functionally, in the hair cortex, hair keratin intermediate filaments are embedded in an interfilamentous matrix, consisting of hair keratin-associated proteins (KRTAP), which are essential for the formation of a rigid and resistant hair shaft through their extensive disulfide bond cross-linking with abundant cysteine residues of hair keratins. The matrix proteins include the high-sulfur and high-glycine-tyrosine keratins. The protein is Keratin-associated protein 26-1 (KRTAP26-1) of Homo sapiens (Human).